We begin with the raw amino-acid sequence, 119 residues long: Large ribosomal subunit protein uL22 (119 aa).

Belongs to the universal ribosomal protein uL22 family. As to quaternary structure, part of the 50S ribosomal subunit.

Functionally, this protein binds specifically to 23S rRNA; its binding is stimulated by other ribosomal proteins, e.g. L4, L17, and L20. It is important during the early stages of 50S assembly. It makes multiple contacts with different domains of the 23S rRNA in the assembled 50S subunit and ribosome. In terms of biological role, the globular domain of the protein is located near the polypeptide exit tunnel on the outside of the subunit, while an extended beta-hairpin is found that lines the wall of the exit tunnel in the center of the 70S ribosome. This chain is Large ribosomal subunit protein uL22, found in Chlorobaculum tepidum (strain ATCC 49652 / DSM 12025 / NBRC 103806 / TLS) (Chlorobium tepidum).